A 223-amino-acid chain; its full sequence is Urease accessory protein UreF (223 aa).

The protein belongs to the UreF family. UreD, UreF and UreG form a complex that acts as a GTP-hydrolysis-dependent molecular chaperone, activating the urease apoprotein by helping to assemble the nickel containing metallocenter of UreC. The UreE protein probably delivers the nickel.

Its subcellular location is the cytoplasm. Functionally, required for maturation of urease via the functional incorporation of the urease nickel metallocenter. This Rhizobium leguminosarum bv. trifolii (strain WSM2304) protein is Urease accessory protein UreF.